We begin with the raw amino-acid sequence, 514 residues long: Bifunctional purine biosynthesis protein PurH (514 aa).

The MGS-like domain occupies 1-143 (MTRRALISVS…KNHAGVLVLV (143 aa)).

This sequence belongs to the PurH family.

The catalysed reaction is (6R)-10-formyltetrahydrofolate + 5-amino-1-(5-phospho-beta-D-ribosyl)imidazole-4-carboxamide = 5-formamido-1-(5-phospho-D-ribosyl)imidazole-4-carboxamide + (6S)-5,6,7,8-tetrahydrofolate. The enzyme catalyses IMP + H2O = 5-formamido-1-(5-phospho-D-ribosyl)imidazole-4-carboxamide. It participates in purine metabolism; IMP biosynthesis via de novo pathway; 5-formamido-1-(5-phospho-D-ribosyl)imidazole-4-carboxamide from 5-amino-1-(5-phospho-D-ribosyl)imidazole-4-carboxamide (10-formyl THF route): step 1/1. It functions in the pathway purine metabolism; IMP biosynthesis via de novo pathway; IMP from 5-formamido-1-(5-phospho-D-ribosyl)imidazole-4-carboxamide: step 1/1. The polypeptide is Bifunctional purine biosynthesis protein PurH (Deinococcus geothermalis (strain DSM 11300 / CIP 105573 / AG-3a)).